Reading from the N-terminus, the 212-residue chain is Small ribosomal subunit protein uS19m (212 aa).

The N-terminal 29 residues, 1–29, are a transit peptide targeting the mitochondrion; that stretch reads MAFCTKLGGHWKQGVNVPVSSMLGSLRYM. Residues 31-109 form the RRM domain; it reads TKLYIGGLSP…FNISVNVAKD (79 aa).

This sequence belongs to the universal ribosomal protein uS19 family. In terms of assembly, component of the mitochondrial ribosome small subunit.

The protein resides in the mitochondrion. Functionally, the RNA-binding domain found in RPS19 may functionally replace the missing mitochondrial RPS13. This is Small ribosomal subunit protein uS19m (RPS19) from Arabidopsis thaliana (Mouse-ear cress).